Here is a 398-residue protein sequence, read N- to C-terminus: Stearoyl-[acyl-carrier-protein] 9-desaturase, chloroplastic (398 aa).

Residues 1–34 (MALKLHHTAFNPSMAVTSSGLPRSYHLRSHRVFM) constitute a chloroplast transit peptide. Residues 46–66 (IPNAKKPHMPPREAHVQKTHS) are disordered. Residues Glu-140, Glu-178, His-181, Glu-231, Glu-264, and His-267 each contribute to the Fe cation site.

This sequence belongs to the fatty acid desaturase type 2 family. Homodimer. Fe(2+) is required as a cofactor.

It is found in the plastid. It localises to the chloroplast. It catalyses the reaction octadecanoyl-[ACP] + 2 reduced [2Fe-2S]-[ferredoxin] + O2 + 2 H(+) = (9Z)-octadecenoyl-[ACP] + 2 oxidized [2Fe-2S]-[ferredoxin] + 2 H2O. It functions in the pathway lipid metabolism; fatty acid metabolism. Its function is as follows. Converts stearoyl-ACP to oleoyl-ACP by introduction of a cis double bond between carbons 9 and 10 of the acyl chain. The protein is Stearoyl-[acyl-carrier-protein] 9-desaturase, chloroplastic of Simmondsia chinensis (Jojoba).